The following is a 1228-amino-acid chain: DNA repair protein rad5 (1228 aa).

Disordered regions lie at residues 1-96 (MDRH…GTLT), 194-242 (PPVR…VLPS), 280-302 (QPPT…PRVS), and 445-474 (KAMD…QELE). A compositionally biased stretch (low complexity) spans 34-43 (PSSSPQFSAP). The span at 70–83 (HNDDDDDDDDDDDE) shows a compositional bias: acidic residues. Residues 211–237 (PKKSSTSQARSRSHAQAQPQPQSNTPT) are compositionally biased toward polar residues. Positions 445-454 (KAMDKAKAGD) are enriched in basic and acidic residues. The segment covering 465-474 (EEAEEGQELE) has biased composition (acidic residues). Residues 574–784 (PKQEQHCLGG…FSLVRFLRVE (211 aa)) enclose the Helicase ATP-binding domain. 587–594 (DEMGLGKT) lines the ATP pocket. The DEAH box motif lies at 735-738 (DEAH). Residues 967 to 1012 (CPICAEEPMIDQAVTGCWHSACKKCLLDYIKHQTDRNEVPRCFQCR) form an RING-type zinc finger. Residues 1060 to 1216 (ALISHLRTLR…MMSDEEKKMQ (157 aa)) enclose the Helicase C-terminal domain.

It belongs to the SNF2/RAD54 helicase family.

The protein localises to the cytoplasm. It is found in the nucleus. Probable helicase, member of the UBC2/RAD6 epistasis group. Functions with DNA repair protein uvs-2/rad18 in error-free postreplication DNA repair. Involved in the maintenance of wild-type rates of instability of simple repetitive sequences such as poly(GT) repeats. Seems to be involved in maintaining a balance which acts in favor of error-prone non-homologous joining during DNA double-strand breaks repairs. The chain is DNA repair protein rad5 (mus-41) from Neurospora crassa (strain ATCC 24698 / 74-OR23-1A / CBS 708.71 / DSM 1257 / FGSC 987).